Here is a 313-residue protein sequence, read N- to C-terminus: Ornithine carbamoyltransferase (313 aa).

Residues 57–60 (STRT), Q84, R108, and 135–138 (HPTQ) each bind carbamoyl phosphate. Residues N167, D231, and 235–236 (SM) contribute to the L-ornithine site. Residues 272 to 273 (CL) and R300 contribute to the carbamoyl phosphate site.

The protein belongs to the aspartate/ornithine carbamoyltransferase superfamily. OTCase family.

It is found in the cytoplasm. It catalyses the reaction carbamoyl phosphate + L-ornithine = L-citrulline + phosphate + H(+). It participates in amino-acid biosynthesis; L-arginine biosynthesis; L-arginine from L-ornithine and carbamoyl phosphate: step 1/3. Its function is as follows. Reversibly catalyzes the transfer of the carbamoyl group from carbamoyl phosphate (CP) to the N(epsilon) atom of ornithine (ORN) to produce L-citrulline. The chain is Ornithine carbamoyltransferase from Pseudothermotoga lettingae (strain ATCC BAA-301 / DSM 14385 / NBRC 107922 / TMO) (Thermotoga lettingae).